A 298-amino-acid polypeptide reads, in one-letter code: Glycine--tRNA ligase alpha subunit (298 aa).

Belongs to the class-II aminoacyl-tRNA synthetase family. Tetramer of two alpha and two beta subunits.

Its subcellular location is the cytoplasm. The catalysed reaction is tRNA(Gly) + glycine + ATP = glycyl-tRNA(Gly) + AMP + diphosphate. This is Glycine--tRNA ligase alpha subunit from Gloeothece citriformis (strain PCC 7424) (Cyanothece sp. (strain PCC 7424)).